We begin with the raw amino-acid sequence, 419 residues long: L-rhamnose isomerase (419 aa).

Residues H262, D294, and D296 each contribute to the Mn(2+) site.

The protein belongs to the rhamnose isomerase family. Homotetramer. Mn(2+) serves as cofactor.

It is found in the cytoplasm. The enzyme catalyses L-rhamnopyranose = L-rhamnulose. It functions in the pathway carbohydrate degradation; L-rhamnose degradation; glycerone phosphate from L-rhamnose: step 1/3. Functionally, catalyzes the interconversion of L-rhamnose and L-rhamnulose. The sequence is that of L-rhamnose isomerase from Shigella flexneri.